Consider the following 440-residue polypeptide: UDP-glucose 6-dehydrogenase YwqF (440 aa).

NAD(+) contacts are provided by residues 2 to 19 (NITV…GVSL), V11, D30, K35, T121, and E155. Residues 151 to 155 (EFLRE), K204, N208, 249 to 253 (FLKAG), and G257 contribute to the substrate site. Catalysis depends on C260, which acts as the Nucleophile. Residue K263 coordinates NAD(+). K320 is a substrate binding site. Residue R327 participates in NAD(+) binding.

Belongs to the UDP-glucose/GDP-mannose dehydrogenase family. In terms of processing, phosphorylated on tyrosine residue(s). Phosphorylated by YwqD and dephosphorylated by YwqE in vitro.

It is found in the cytoplasm. The catalysed reaction is UDP-alpha-D-glucose + 2 NAD(+) + H2O = UDP-alpha-D-glucuronate + 2 NADH + 3 H(+). It participates in nucleotide-sugar biosynthesis; UDP-alpha-D-glucuronate biosynthesis; UDP-alpha-D-glucuronate from UDP-alpha-D-glucose: step 1/1. With respect to regulation, competitively inhibited by UDP-glucose. Activated by phosphorylation, which may increase affinity for NAD(+); inhibited by dephosphorylation. In terms of biological role, catalyzes the conversion of UDP-glucose into UDP-glucuronate, one of the precursors of teichuronic acid. The protein is UDP-glucose 6-dehydrogenase YwqF (ywqF) of Bacillus subtilis (strain 168).